The chain runs to 122 residues: Large ribosomal subunit protein uL18 (122 aa).

It belongs to the universal ribosomal protein uL18 family. As to quaternary structure, part of the 50S ribosomal subunit; part of the 5S rRNA/L5/L18/L25 subcomplex. Contacts the 5S and 23S rRNAs.

Its function is as follows. This is one of the proteins that bind and probably mediate the attachment of the 5S RNA into the large ribosomal subunit, where it forms part of the central protuberance. The chain is Large ribosomal subunit protein uL18 from Leptospira borgpetersenii serovar Hardjo-bovis (strain JB197).